Reading from the N-terminus, the 54-residue chain is Large ribosomal subunit protein bL33C (54 aa).

It belongs to the bacterial ribosomal protein bL33 family.

The chain is Large ribosomal subunit protein bL33C from Streptomyces griseus subsp. griseus (strain JCM 4626 / CBS 651.72 / NBRC 13350 / KCC S-0626 / ISP 5235).